Consider the following 316-residue polypeptide: ATP synthase gamma chain (316 aa).

This sequence belongs to the ATPase gamma chain family. In terms of assembly, F-type ATPases have 2 components, CF(1) - the catalytic core - and CF(0) - the membrane proton channel. CF(1) has five subunits: alpha(3), beta(3), gamma(1), delta(1), epsilon(1). CF(0) has three main subunits: a, b and c.

The protein resides in the cellular thylakoid membrane. Functionally, produces ATP from ADP in the presence of a proton gradient across the membrane. The gamma chain is believed to be important in regulating ATPase activity and the flow of protons through the CF(0) complex. In Prochlorococcus marinus (strain SARG / CCMP1375 / SS120), this protein is ATP synthase gamma chain.